The chain runs to 348 residues: L-threonine 3-dehydrogenase (348 aa).

Residue Cys-42 coordinates Zn(2+). Residues Thr-44 and His-47 each act as charge relay system in the active site. Residues His-67, Glu-68, Cys-97, Cys-100, Cys-103, and Cys-111 each contribute to the Zn(2+) site. NAD(+) contacts are provided by residues Leu-179, Glu-199, Arg-204, 266–268 (LGL), and 291–292 (IT).

This sequence belongs to the zinc-containing alcohol dehydrogenase family. Homodimer. Homotetramer; dimer of dimers. The cofactor is Zn(2+).

The protein resides in the cytoplasm. It carries out the reaction L-threonine + NAD(+) = (2S)-2-amino-3-oxobutanoate + NADH + H(+). It functions in the pathway amino-acid degradation; L-threonine degradation via oxydo-reductase pathway; glycine from L-threonine: step 1/2. Is totally inhibited by EDTA in vitro. In terms of biological role, catalyzes the NAD(+)-dependent oxidation of L-threonine to 2-amino-3-ketobutyrate. Is much less efficient when using NADP(+) instead of NAD(+). To a lesser extent, also catalyzes the oxidation of L-serine and DL-threo-3-phenylserine, but not that of L-allo-threonine, D-threonine and D-allo-threonine and many other L-amino acids. The chain is L-threonine 3-dehydrogenase from Pyrococcus horikoshii (strain ATCC 700860 / DSM 12428 / JCM 9974 / NBRC 100139 / OT-3).